Reading from the N-terminus, the 206-residue chain is uncharacterized protein (206 aa).

Residues 166-186 traverse the membrane as a helical segment; sequence FYTGLSVIVGGATALALGLFF.

The protein localises to the membrane. This is an uncharacterized protein from Dictyostelium discoideum (Social amoeba).